Here is a 386-residue protein sequence, read N- to C-terminus: bHLH transcription factor RHL1 (386 aa).

Residues 119–186 (FTGSLNGTQP…RRGQATDPHS (68 aa)) are disordered. The span at 127–137 (QPQQHFQHPPQ) shows a compositional bias: low complexity. The segment covering 138–151 (GNSNQIQGQNFGAT) has biased composition (polar residues). The basic motif; degenerate stretch occupies residues 180–193 (QATDPHSIAERLRR). The region spanning 180–229 (QATDPHSIAERLRRERIAERMKALQELVPNANKTDKASMLDEIIDYVKFL) is the bHLH domain. Positions 194–229 (ERIAERMKALQELVPNANKTDKASMLDEIIDYVKFL) are helix-loop-helix motif.

In terms of tissue distribution, expressed in root epidermal cells.

It is found in the nucleus. Transcription factor that regulates the development of root hairs. The chain is bHLH transcription factor RHL1 from Lotus japonicus (Lotus corniculatus var. japonicus).